The chain runs to 467 residues: ATP synthase subunit beta (467 aa).

152–159 (GGAGVGKT) provides a ligand contact to ATP.

This sequence belongs to the ATPase alpha/beta chains family. As to quaternary structure, F-type ATPases have 2 components, CF(1) - the catalytic core - and CF(0) - the membrane proton channel. CF(1) has five subunits: alpha(3), beta(3), gamma(1), delta(1), epsilon(1). CF(0) has three main subunits: a(1), b(2) and c(9-12). The alpha and beta chains form an alternating ring which encloses part of the gamma chain. CF(1) is attached to CF(0) by a central stalk formed by the gamma and epsilon chains, while a peripheral stalk is formed by the delta and b chains.

It localises to the cell membrane. It carries out the reaction ATP + H2O + 4 H(+)(in) = ADP + phosphate + 5 H(+)(out). Functionally, produces ATP from ADP in the presence of a proton gradient across the membrane. The catalytic sites are hosted primarily by the beta subunits. This is ATP synthase subunit beta from Caldicellulosiruptor saccharolyticus (strain ATCC 43494 / DSM 8903 / Tp8T 6331).